The following is a 519-amino-acid chain: uncharacterized protein (519 aa).

Transmembrane regions (helical) follow at residues 19-39 (FSSSVWSIVPALLAIILAIAT), 42-62 (VLVSLSAGIIIGSLMLSDWQI), 87-107 (MNIVLFLLLLGVLTALLTVSG), 128-148 (LLAASLVFVTFIDDYFHSLAV), 179-199 (VMMPVSSWGAYIITLIGGLLA), 220-240 (FYAIFSIIMVFFVAYFSFDIA), 270-290 (LILPILVLIIATVSMMIYTGA), 311-331 (VGTSLVVGGFCSIIISTLLII), 345-365 (WIVGIKSMSGAIAILFFAWTI), 386-406 (IPMQFLPVILFVLGAAMAFST), 413-433 (FGIMLPIAAAMAANAAPELLL), 475-495 (LPYAATVATATSIGYIVVGFT), and 496-516 (YSGLAGFAATAVSLIVIIFAV).

Its subcellular location is the cell membrane. This is an uncharacterized protein from Haemophilus influenzae (strain ATCC 51907 / DSM 11121 / KW20 / Rd).